Here is a 265-residue protein sequence, read N- to C-terminus: Transcription factor Spi-B-like (265 aa).

Positions 1-31 (MLTLEASQLDGPHPSYMFSDSSFYDLDSCKP) are TAD1 (Acidic). Residues 42-63 (AEPPTDPCAGWLELAEPGYEPF) form a TAD2 region. A disordered region spans residues 127–160 (TPLSEDDDFPTDAPALEVSDSDSDENLSPGGSLD). The segment at residues 169 to 252 (LRLYQFLLGL…VKKKLTYQFG (84 aa)) is a DNA-binding region (ETS).

Belongs to the ETS family.

Its subcellular location is the nucleus. Functionally, may act as a sequence specific transcriptional activator. In Paleosuchus palpebrosus (Cuvier's smooth-fronted caiman), this protein is Transcription factor Spi-B-like.